We begin with the raw amino-acid sequence, 239 residues long: Short palate, lung and nasal epithelium carcinoma-associated protein 2A (239 aa).

The signal sequence occupies residues M1–S20. A disulfide bond links C166 and C209.

Belongs to the BPI/LBP/Plunc superfamily. Plunc family. In terms of tissue distribution, detected in salivary tissues: parotid, submandibular and sublingual glands.

The protein localises to the secreted. This chain is Short palate, lung and nasal epithelium carcinoma-associated protein 2A (SPLUNC2A), found in Bos taurus (Bovine).